The following is a 245-amino-acid chain: Uroporphyrinogen-III C-methyltransferase (245 aa).

S-adenosyl-L-homocysteine contacts are provided by residues Pro-12, 87 to 89 (GGD), 117 to 118 (TA), Met-168, Ala-197, and Ala-225.

The protein belongs to the precorrin methyltransferase family.

The enzyme catalyses uroporphyrinogen III + 2 S-adenosyl-L-methionine = precorrin-2 + 2 S-adenosyl-L-homocysteine + H(+). The protein operates within cofactor biosynthesis; adenosylcobalamin biosynthesis; precorrin-2 from uroporphyrinogen III: step 1/1. It participates in porphyrin-containing compound metabolism; siroheme biosynthesis; precorrin-2 from uroporphyrinogen III: step 1/1. In terms of biological role, catalyzes the two successive C-2 and C-7 methylation reactions involved in the conversion of uroporphyrinogen III to precorrin-2 via the intermediate formation of precorrin-1. It is a step in the biosynthesis of both cobalamin (vitamin B12) and siroheme. This is Uroporphyrinogen-III C-methyltransferase (cobA) from Pseudomonas aeruginosa (strain ATCC 15692 / DSM 22644 / CIP 104116 / JCM 14847 / LMG 12228 / 1C / PRS 101 / PAO1).